We begin with the raw amino-acid sequence, 311 residues long: Probable manganese-dependent inorganic pyrophosphatase (311 aa).

The Mn(2+) site is built by His-9, Asp-13, Asp-15, Asp-77, His-99, and Asp-151.

It belongs to the PPase class C family. The cofactor is Mn(2+).

The protein localises to the cytoplasm. The enzyme catalyses diphosphate + H2O = 2 phosphate + H(+). This is Probable manganese-dependent inorganic pyrophosphatase from Streptococcus pyogenes serotype M49 (strain NZ131).